The chain runs to 146 residues: D-aminoacyl-tRNA deacylase (146 aa).

Residues 137-138 (GP) carry the Gly-cisPro motif, important for rejection of L-amino acids motif.

It belongs to the DTD family. As to quaternary structure, homodimer.

The protein localises to the cytoplasm. The enzyme catalyses glycyl-tRNA(Ala) + H2O = tRNA(Ala) + glycine + H(+). The catalysed reaction is a D-aminoacyl-tRNA + H2O = a tRNA + a D-alpha-amino acid + H(+). Functionally, an aminoacyl-tRNA editing enzyme that deacylates mischarged D-aminoacyl-tRNAs. Also deacylates mischarged glycyl-tRNA(Ala), protecting cells against glycine mischarging by AlaRS. Acts via tRNA-based rather than protein-based catalysis; rejects L-amino acids rather than detecting D-amino acids in the active site. By recycling D-aminoacyl-tRNA to D-amino acids and free tRNA molecules, this enzyme counteracts the toxicity associated with the formation of D-aminoacyl-tRNA entities in vivo and helps enforce protein L-homochirality. This chain is D-aminoacyl-tRNA deacylase, found in Bacillus mycoides (strain KBAB4) (Bacillus weihenstephanensis).